Reading from the N-terminus, the 263-residue chain is Putative steroid dehydrogenase 4 (263 aa).

The Proton acceptor role is filled by Y154.

Belongs to the short-chain dehydrogenases/reductases (SDR) family. 17-beta-HSD 3 subfamily.

The polypeptide is Putative steroid dehydrogenase 4 (stdh-4) (Caenorhabditis elegans).